The sequence spans 694 residues: Soluble starch synthase 2-2, chloroplastic/amyloplastic (694 aa).

Residues 1-15 (MSGAIASSPAATLFL) constitute a chloroplast transit peptide. The segment at 93 to 197 (KADHVEDSVS…DSENKESGPL (105 aa)) is disordered. Low complexity predominate over residues 127–142 (APVSKPKVDPSVPASK). The segment covering 156–176 (AALDKKEDVGVAEPLEAKADA) has biased composition (basic and acidic residues). Over residues 177 to 186 (GGDAGAVSSA) the composition is skewed to low complexity. An ADP-alpha-D-glucose-binding site is contributed by K217.

Belongs to the glycosyltransferase 1 family. Bacterial/plant glycogen synthase subfamily. In terms of tissue distribution, expressed in leaves and weakly in endosperm and roots.

It is found in the plastid. Its subcellular location is the amyloplast. The protein localises to the chloroplast. The catalysed reaction is [(1-&gt;4)-alpha-D-glucosyl](n) + ADP-alpha-D-glucose = [(1-&gt;4)-alpha-D-glucosyl](n+1) + ADP + H(+). It functions in the pathway glycan biosynthesis; starch biosynthesis. Functionally, may contribute to the deposition of transient starch in chloroplasts of leaves. The protein is Soluble starch synthase 2-2, chloroplastic/amyloplastic (SSII-2) of Oryza sativa subsp. japonica (Rice).